The sequence spans 165 residues: Small ribosomal subunit protein uS5 (165 aa).

One can recognise an S5 DRBM domain in the interval 13–76 (LEEKVLVVNR…DAARKNLVSI (64 aa)).

It belongs to the universal ribosomal protein uS5 family. In terms of assembly, part of the 30S ribosomal subunit. Contacts proteins S4 and S8.

With S4 and S12 plays an important role in translational accuracy. Its function is as follows. Located at the back of the 30S subunit body where it stabilizes the conformation of the head with respect to the body. The sequence is that of Small ribosomal subunit protein uS5 from Chlamydia muridarum (strain MoPn / Nigg).